A 2230-amino-acid chain; its full sequence is DNA polymerase epsilon catalytic subunit A (2230 aa).

Positions 1 to 19 are enriched in polar residues; that stretch reads MPTRQPSKYGNKFRSSSAS. A disordered region spans residues 1 to 24; sequence MPTRQPSKYGNKFRSSSASFKPKR. Zn(2+) is bound by residues C2101, C2104, C2136, and C2139. The CysA-type zinc-finger motif lies at 2101 to 2139; sequence CNACCLIRDLDLCRDEDVLPEMGSDPNKAAPKPWRCPFC. Residues C2170, C2173, C2185, and C2187 each contribute to the [4Fe-4S] cluster site. Residues 2170-2187 carry the CysB motif motif; sequence CSKCGGLKISDFMEHCSC.

This sequence belongs to the DNA polymerase type-B family. Heterotetramer. Consists of 4 subunits: pol2, dpb2, dpb3 and dpb4. It depends on [4Fe-4S] cluster as a cofactor.

The protein localises to the nucleus. It catalyses the reaction DNA(n) + a 2'-deoxyribonucleoside 5'-triphosphate = DNA(n+1) + diphosphate. DNA polymerase II participates in chromosomal DNA replication. This chain is DNA polymerase epsilon catalytic subunit A (pol2), found in Aspergillus fumigatus (strain ATCC MYA-4609 / CBS 101355 / FGSC A1100 / Af293) (Neosartorya fumigata).